Reading from the N-terminus, the 195-residue chain is Imidazoleglycerol-phosphate dehydratase (195 aa).

The protein belongs to the imidazoleglycerol-phosphate dehydratase family.

The protein resides in the cytoplasm. It catalyses the reaction D-erythro-1-(imidazol-4-yl)glycerol 3-phosphate = 3-(imidazol-4-yl)-2-oxopropyl phosphate + H2O. Its pathway is amino-acid biosynthesis; L-histidine biosynthesis; L-histidine from 5-phospho-alpha-D-ribose 1-diphosphate: step 6/9. The sequence is that of Imidazoleglycerol-phosphate dehydratase from Methylorubrum extorquens (strain CM4 / NCIMB 13688) (Methylobacterium extorquens).